Consider the following 423-residue polypeptide: Putative galacturan 1,4-alpha-galacturonidase C (423 aa).

The signal sequence occupies residues 1–20 (MRFSIISLVSLPLFLGLTYA). 5 N-linked (GlcNAc...) asparagine glycosylation sites follow: Asn100, Asn120, Asn150, Asn173, and Asn185. Catalysis depends on Asp229, which acts as the Proton donor. Cys231 and Cys248 are joined by a disulfide. The N-linked (GlcNAc...) asparagine glycan is linked to Asn245. Asn252 is a catalytic residue. N-linked (GlcNAc...) asparagine glycosylation is found at Asn344 and Asn362. Cys379 and Cys385 are joined by a disulfide. Asn400 carries N-linked (GlcNAc...) asparagine glycosylation. A disulfide bridge links Cys409 with Cys423.

Belongs to the glycosyl hydrolase 28 family.

The protein resides in the secreted. The enzyme catalyses [(1-&gt;4)-alpha-D-galacturonosyl](n) + H2O = alpha-D-galacturonate + [(1-&gt;4)-alpha-D-galacturonosyl](n-1). Specific in hydrolyzing the terminal glycosidic bond of polygalacturonic acid and oligogalacturonates. The polypeptide is Putative galacturan 1,4-alpha-galacturonidase C (rgxC) (Neosartorya fischeri (strain ATCC 1020 / DSM 3700 / CBS 544.65 / FGSC A1164 / JCM 1740 / NRRL 181 / WB 181) (Aspergillus fischerianus)).